The primary structure comprises 149 residues: Transcriptional repressor NrdR (149 aa).

A zinc finger lies at 3-34; that stretch reads CPFCSATDTKVIDSRLVADGHQVRRRRECAEC. The 91-residue stretch at 49-139 folds into the ATP-cone domain; that stretch reads PRVVKQDGSR…VYRAFEDVSE (91 aa).

The protein belongs to the NrdR family. Zn(2+) is required as a cofactor.

Negatively regulates transcription of bacterial ribonucleotide reductase nrd genes and operons by binding to NrdR-boxes. This Shewanella woodyi (strain ATCC 51908 / MS32) protein is Transcriptional repressor NrdR.